The following is a 119-amino-acid chain: Holo-[acyl-carrier-protein] synthase (119 aa).

Asp-8 and Glu-58 together coordinate Mg(2+).

Belongs to the P-Pant transferase superfamily. AcpS family. It depends on Mg(2+) as a cofactor.

It localises to the cytoplasm. The catalysed reaction is apo-[ACP] + CoA = holo-[ACP] + adenosine 3',5'-bisphosphate + H(+). Transfers the 4'-phosphopantetheine moiety from coenzyme A to a Ser of acyl-carrier-protein. The sequence is that of Holo-[acyl-carrier-protein] synthase from Bacillus cytotoxicus (strain DSM 22905 / CIP 110041 / 391-98 / NVH 391-98).